We begin with the raw amino-acid sequence, 231 residues long: NADH-ubiquinone oxidoreductase chain 4 (231 aa).

Helical transmembrane passes span 1–21 (PIAGSMVLAAVLLKLGGYGII), 34–54 (MFLPFIVLALWGAILANLTCL), 63–85 (IAYSSISHMGLVVAAIIIQTPWG), 89–111 (AMALMIAHGFTSSALFCLANTTY), 128–148 (ILPMTTTWWLLANLMNIATPP), 169–189 (TIILLGLSMLITASYSLHMFL), and 211–231 (LLMALHLVPLMMISMKPELII).

The protein belongs to the complex I subunit 4 family.

The protein localises to the mitochondrion membrane. It carries out the reaction a ubiquinone + NADH + 5 H(+)(in) = a ubiquinol + NAD(+) + 4 H(+)(out). Its function is as follows. Core subunit of the mitochondrial membrane respiratory chain NADH dehydrogenase (Complex I) that is believed to belong to the minimal assembly required for catalysis. Complex I functions in the transfer of electrons from NADH to the respiratory chain. The immediate electron acceptor for the enzyme is believed to be ubiquinone. This Cerrophidion godmani (Porthidium godmani) protein is NADH-ubiquinone oxidoreductase chain 4 (MT-ND4).